The following is a 41-amino-acid chain: Large ribosomal subunit protein bL36 (41 aa).

It belongs to the bacterial ribosomal protein bL36 family.

This is Large ribosomal subunit protein bL36 from Sinorhizobium fredii (strain NBRC 101917 / NGR234).